Here is a 505-residue protein sequence, read N- to C-terminus: MCGIVGIVSQSPVNESIYAALTLLQHRGQDAAGIVTVDDENRFRLRKANGLVSDVFHQEHMLRLQGNAGLGHVRYPTAGSSSVSEAQPFYVNSPYGVTLVHNGNLTNSVELKEKVFKTARRHVNTNSDSELLLNILANHLDHIPQDHLDPQDIFYAVRKTHKDVRGAYACLAMIIGHGMVAFRDPFGIRPLVLGKREENGKTDYMFASETVALDIVGFEFVRDIAAGEAVYVTFDGELYSQQCAESAVLNPCIFEYVYFARPDSTIDGVSVYAARVHMGEKLGQKIAKEWADEIDNIDVVIPVPETSTDIALQIARVLGKPYRQGFVKNRYVGRTFIMPGQAQRISSVRRKLNTIKAEFKDKNVLLVDDSIVRGTTSEQIVEMARSAGAKKIYFASAAPEIRYPNVYGIDMPSRDELIAYGRNVDEIAELIGVDKLIFQDLTALTESVQLENPAIQGFDCSVFTGEYITGDISPEYLEKIATQRNDNAKKKREKQASNLEIYNEQ.

C2 functions as the Nucleophile in the catalytic mechanism. Residues C2–D235 enclose the Glutamine amidotransferase type-2 domain. The Mg(2+) site is built by T306, D368, and D369. The tract at residues R484–Q505 is disordered. The span at A496–Q505 shows a compositional bias: polar residues.

This sequence in the C-terminal section; belongs to the purine/pyrimidine phosphoribosyltransferase family. Mg(2+) serves as cofactor.

The catalysed reaction is 5-phospho-beta-D-ribosylamine + L-glutamate + diphosphate = 5-phospho-alpha-D-ribose 1-diphosphate + L-glutamine + H2O. It functions in the pathway purine metabolism; IMP biosynthesis via de novo pathway; N(1)-(5-phospho-D-ribosyl)glycinamide from 5-phospho-alpha-D-ribose 1-diphosphate: step 1/2. Catalyzes the formation of phosphoribosylamine from phosphoribosylpyrophosphate (PRPP) and glutamine. In Haemophilus influenzae (strain ATCC 51907 / DSM 11121 / KW20 / Rd), this protein is Amidophosphoribosyltransferase.